The primary structure comprises 180 residues: Large ribosomal subunit protein uL5 (180 aa).

This sequence belongs to the universal ribosomal protein uL5 family. Part of the 50S ribosomal subunit; part of the 5S rRNA/L5/L18/L25 subcomplex. Contacts the 5S rRNA and the P site tRNA. Forms a bridge to the 30S subunit in the 70S ribosome.

This is one of the proteins that bind and probably mediate the attachment of the 5S RNA into the large ribosomal subunit, where it forms part of the central protuberance. In the 70S ribosome it contacts protein S13 of the 30S subunit (bridge B1b), connecting the 2 subunits; this bridge is implicated in subunit movement. Contacts the P site tRNA; the 5S rRNA and some of its associated proteins might help stabilize positioning of ribosome-bound tRNAs. The polypeptide is Large ribosomal subunit protein uL5 (Oenococcus oeni (strain ATCC BAA-331 / PSU-1)).